The following is a 549-amino-acid chain: Urocanate hydratase (549 aa).

NAD(+)-binding positions include 46–47 (GG), glutamine 124, 170–172 (GMG), glutamate 190, arginine 195, 236–237 (NA), 257–261 (QTSAH), 267–268 (YV), and tyrosine 316. The active site involves cysteine 404. Position 486 (glycine 486) interacts with NAD(+).

Belongs to the urocanase family. NAD(+) is required as a cofactor.

The protein resides in the cytoplasm. The enzyme catalyses 4-imidazolone-5-propanoate = trans-urocanate + H2O. It functions in the pathway amino-acid degradation; L-histidine degradation into L-glutamate; N-formimidoyl-L-glutamate from L-histidine: step 2/3. Its function is as follows. Catalyzes the conversion of urocanate to 4-imidazolone-5-propionate. This Caldanaerobacter subterraneus subsp. tengcongensis (strain DSM 15242 / JCM 11007 / NBRC 100824 / MB4) (Thermoanaerobacter tengcongensis) protein is Urocanate hydratase.